The primary structure comprises 227 residues: MNDIILTSQKLYKSYHDGTSTVEVLKGVDLAITKGDRIAIIGPSGSGKSTLLHLLGGLDKPTSGLITLGNVNWQKINEKQRCQLRNQQLGFVYQFHHLLPEFTALENVMMPLLLAGMAVKDAEEKVINMLEQVGLKPRLTHKPAQLSGGERQRVAIARALVHQPHCVLADEPTGNLDEATASKVFDLMLELNKKMNTALVIVTHDQRIAERMDRVLVLHEGSLYARE.

In terms of domain architecture, ABC transporter spans 6–227 (LTSQKLYKSY…LHEGSLYARE (222 aa)). 42–49 (GPSGSGKS) is a binding site for ATP.

Belongs to the ABC transporter superfamily. Lipoprotein translocase (TC 3.A.1.125) family. In terms of assembly, the complex is composed of two ATP-binding proteins (LolD) and two transmembrane proteins (LolC and LolE).

It localises to the cell inner membrane. Part of the ABC transporter complex LolCDE involved in the translocation of mature outer membrane-directed lipoproteins, from the inner membrane to the periplasmic chaperone, LolA. Responsible for the formation of the LolA-lipoprotein complex in an ATP-dependent manner. This is Lipoprotein-releasing system ATP-binding protein LolD from Legionella pneumophila (strain Lens).